Here is a 663-residue protein sequence, read N- to C-terminus: DNA topoisomerase 4 subunit B (663 aa).

ATP contacts are provided by residues tyrosine 21, asparagine 61, aspartate 88, 130 to 136 (GLHGVGI), and lysine 360. A Toprim domain is found at 440–554 (TELFIVEGDS…EGHLYLAKPP (115 aa)). Mg(2+) is bound by residues glutamate 446, aspartate 519, and aspartate 521.

Belongs to the type II topoisomerase family. ParE type 1 subfamily. In terms of assembly, heterotetramer composed of ParC and ParE. Mg(2+) is required as a cofactor. The cofactor is Mn(2+). Ca(2+) serves as cofactor.

It catalyses the reaction ATP-dependent breakage, passage and rejoining of double-stranded DNA.. Topoisomerase IV is essential for chromosome segregation. It relaxes supercoiled DNA. Performs the decatenation events required during the replication of a circular DNA molecule. The sequence is that of DNA topoisomerase 4 subunit B from Rickettsia typhi (strain ATCC VR-144 / Wilmington).